We begin with the raw amino-acid sequence, 208 residues long: Large ribosomal subunit protein uL4 (208 aa).

The interval 44–76 (RRQGTQSTKTKSEVRGGGRKPWRQKGTGRARHG) is disordered. Residues 60–76 (GGRKPWRQKGTGRARHG) are compositionally biased toward basic residues.

It belongs to the universal ribosomal protein uL4 family. In terms of assembly, part of the 50S ribosomal subunit.

In terms of biological role, one of the primary rRNA binding proteins, this protein initially binds near the 5'-end of the 23S rRNA. It is important during the early stages of 50S assembly. It makes multiple contacts with different domains of the 23S rRNA in the assembled 50S subunit and ribosome. Functionally, forms part of the polypeptide exit tunnel. The protein is Large ribosomal subunit protein uL4 of Acetivibrio thermocellus (strain ATCC 27405 / DSM 1237 / JCM 9322 / NBRC 103400 / NCIMB 10682 / NRRL B-4536 / VPI 7372) (Clostridium thermocellum).